A 238-amino-acid chain; its full sequence is Sugar fermentation stimulation protein homolog (238 aa).

This sequence belongs to the SfsA family.

The sequence is that of Sugar fermentation stimulation protein homolog from Pseudomonas entomophila (strain L48).